A 329-amino-acid chain; its full sequence is 7,8-didemethyl-8-hydroxy-5-deazariboflavin synthase (329 aa).

Residues 1–235 form the Radical SAM core domain; the sequence is MFIPVTNICR…SDVSVQVAPN (235 aa). [4Fe-4S] cluster contacts are provided by Cys9, Cys13, and Cys16.

It belongs to the radical SAM superfamily. CofG family. Consists of two subunits, CofG and CofH. The cofactor is [4Fe-4S] cluster.

It carries out the reaction 5-amino-5-(4-hydroxybenzyl)-6-(D-ribitylimino)-5,6-dihydrouracil + S-adenosyl-L-methionine = 7,8-didemethyl-8-hydroxy-5-deazariboflavin + 5'-deoxyadenosine + L-methionine + NH4(+) + H(+). The protein operates within cofactor biosynthesis; coenzyme F0 biosynthesis. In terms of biological role, catalyzes the radical-mediated synthesis of 7,8-didemethyl-8-hydroxy-5-deazariboflavin from 5-amino-5-(4-hydroxybenzyl)-6-(D-ribitylimino)-5,6-dihydrouracil. This is 7,8-didemethyl-8-hydroxy-5-deazariboflavin synthase from Methanosarcina acetivorans (strain ATCC 35395 / DSM 2834 / JCM 12185 / C2A).